We begin with the raw amino-acid sequence, 390 residues long: 4-hydroxy-3-methylbut-2-en-1-yl diphosphate synthase (flavodoxin) (390 aa).

[4Fe-4S] cluster-binding residues include Cys281, Cys284, Cys316, and Glu323.

Belongs to the IspG family. [4Fe-4S] cluster serves as cofactor.

It catalyses the reaction (2E)-4-hydroxy-3-methylbut-2-enyl diphosphate + oxidized [flavodoxin] + H2O + 2 H(+) = 2-C-methyl-D-erythritol 2,4-cyclic diphosphate + reduced [flavodoxin]. Its pathway is isoprenoid biosynthesis; isopentenyl diphosphate biosynthesis via DXP pathway; isopentenyl diphosphate from 1-deoxy-D-xylulose 5-phosphate: step 5/6. Converts 2C-methyl-D-erythritol 2,4-cyclodiphosphate (ME-2,4cPP) into 1-hydroxy-2-methyl-2-(E)-butenyl 4-diphosphate. The sequence is that of 4-hydroxy-3-methylbut-2-en-1-yl diphosphate synthase (flavodoxin) from Salinispora tropica (strain ATCC BAA-916 / DSM 44818 / JCM 13857 / NBRC 105044 / CNB-440).